The primary structure comprises 138 residues: Thyrotropin subunit beta (138 aa).

The first 20 residues, 1–20, serve as a signal peptide directing secretion; that stretch reads MTAIFLMSMLFGLACGQAMS. Disulfide bonds link Cys22-Cys72, Cys36-Cys87, Cys39-Cys125, Cys47-Cys103, Cys51-Cys105, and Cys108-Cys115. The N-linked (GlcNAc...) asparagine glycan is linked to Asn43. A propeptide spanning residues 133–138 is cleaved from the precursor; the sequence is VLEFSI.

It belongs to the glycoprotein hormones subunit beta family. In terms of assembly, heterodimer of a common alpha chain and a unique beta chain which confers biological specificity to thyrotropin, lutropin, follitropin and gonadotropin.

The protein resides in the secreted. Indispensable for the control of thyroid structure and metabolism. This chain is Thyrotropin subunit beta (TSHB), found in Sus scrofa (Pig).